Reading from the N-terminus, the 1551-residue chain is Dual oxidase 1 (1551 aa).

Positions 1 to 21 (MGFCLALTWTFLVGSWTSMGA) are cleaved as a signal peptide. The Extracellular segment spans residues 22-596 (QKPISWEVQR…YFEGSGFGFG (575 aa)). The interval 26–593 (SWEVQRFDGW…MQDYFEGSGF (568 aa)) is peroxidase-like; mediates peroxidase activity. The N-linked (GlcNAc...) asparagine glycan is linked to asparagine 94. The segment at 197–222 (LASGPDPAFPRNAQPPLLMWSAPDPA) is disordered. 4 N-linked (GlcNAc...) asparagine glycosylation sites follow: asparagine 342, asparagine 354, asparagine 461, and asparagine 534. The helical transmembrane segment at 597 to 617 (VTIGTLCCFPLVSLLSAWIVA) threads the bilayer. Topologically, residues 618-1044 (RLRKKNFKKL…KRFIENYRRH (427 aa)) are cytoplasmic. 3 consecutive EF-hand domains span residues 815-850 (PQDMFVESMFSLADKDGNGYLSFREFLDILVVFMKG), 851-886 (SPEEKSRLMFRMYDFDGNGLISKDEFIRMLRSFIEI), and 895-930 (QLTEVVESMFRESGFQDKEELTWEDFHFMLRDHDSE). Ca(2+) is bound by residues aspartate 828, aspartate 830, asparagine 832, tyrosine 834, glutamate 839, aspartate 864, aspartate 866, asparagine 868, and glutamate 875. The interaction with TXNDC11 stretch occupies residues 956-1248 (YISQEKICPS…GSFGLIQLPR (293 aa)). A helical transmembrane segment spans residues 1045-1065 (IGCVAVFYAITGGLFLERAYY). Residues 1066–1080 (YAFGAHHMGITDTTR) lie on the Extracellular side of the membrane. Residues 1081 to 1101 (VGIILSRGTAASISFMFSYIL) form a helical membrane-spanning segment. The 183-residue stretch at 1087 to 1269 (RGTAASISFM…YVGDKLVSLS (183 aa)) folds into the Ferric oxidoreductase domain. Over 1102-1151 (LTMCRNLITFLRETFLNRYVPFDAAVDFHRLIASTAIVLTVLHSAGHVVN) the chain is Cytoplasmic. A helical membrane pass occupies residues 1152 to 1172 (VYLFSISPLSVLSCLFPGLFH). Residues 1173–1188 (NDGSEFPQKYYWWFFQ) lie on the Extracellular side of the membrane. The helical transmembrane segment at 1189–1209 (TVPGLTGVMLLLVLAIMYVFA) threads the bilayer. Over 1210 to 1226 (SHHFRRHSFRGFWLTHH) the chain is Cytoplasmic. The helical transmembrane segment at 1227–1247 (LYILLYVLLIIHGSFGLIQLP) threads the bilayer. Residue arginine 1248 is a topological domain, extracellular. A helical membrane pass occupies residues 1249–1269 (FHIFFLVPALIYVGDKLVSLS). The 107-residue stretch at 1270-1376 (RKKVEISVVK…DGPFGEGHQE (107 aa)) folds into the FAD-binding FR-type domain. Residues 1270 to 1551 (RKKVEISVVK…THFSHHYENF (282 aa)) are Cytoplasmic-facing.

This sequence in the N-terminal section; belongs to the peroxidase family. Interacts with TPO and CYBA. Interacts with TXNDC11. N-glycosylated. In terms of tissue distribution, expressed in thyrocytes (at protein level). Specifically expressed in thyroid.

It localises to the apical cell membrane. The catalysed reaction is NADH + O2 + H(+) = H2O2 + NAD(+). It carries out the reaction NADPH + O2 + H(+) = H2O2 + NADP(+). It participates in hormone biosynthesis; thyroid hormone biosynthesis. With respect to regulation, peroxidase activity is inhibited by aminobenzohydrazide. The NADPH oxidase activity is calcium-dependent. Functionally, generates hydrogen peroxide which is required for the activity of thyroid peroxidase/TPO and lactoperoxidase/LPO. Plays a role in thyroid hormones synthesis and lactoperoxidase-mediated antimicrobial defense at the surface of mucosa. May have its own peroxidase activity through its N-terminal peroxidase-like domain. The protein is Dual oxidase 1 (DUOX1) of Canis lupus familiaris (Dog).